The primary structure comprises 371 residues: tRNA-specific 2-thiouridylase MnmA (371 aa).

ATP is bound by residues 14–21 (GMSGGVDS) and M40. The tract at residues 100–102 (NPD) is interaction with target base in tRNA. C105 acts as the Nucleophile in catalysis. Residues C105 and C205 are joined by a disulfide bond. Residue G129 coordinates ATP. The interval 155-157 (KDQ) is interaction with tRNA. Residue C205 is the Cysteine persulfide intermediate of the active site. An interaction with tRNA region spans residues 321 to 322 (RY).

Belongs to the MnmA/TRMU family.

It localises to the cytoplasm. The catalysed reaction is S-sulfanyl-L-cysteinyl-[protein] + uridine(34) in tRNA + AH2 + ATP = 2-thiouridine(34) in tRNA + L-cysteinyl-[protein] + A + AMP + diphosphate + H(+). In terms of biological role, catalyzes the 2-thiolation of uridine at the wobble position (U34) of tRNA, leading to the formation of s(2)U34. This chain is tRNA-specific 2-thiouridylase MnmA, found in Bordetella parapertussis (strain 12822 / ATCC BAA-587 / NCTC 13253).